A 282-amino-acid chain; its full sequence is Protoheme IX farnesyltransferase (282 aa).

9 helical membrane passes run 13–33, 36–56, 74–96, 101–120, 129–149, 156–176, 207–227, 232–252, and 261–281; these read VAGM…GAAG, MVTS…FNQI, ASGR…PALI, AGGV…YNGV, AFSL…GWLA, SPEI…HFWL, LWYA…FIAE, IAVC…LASP, and VSML…SGII.

The protein belongs to the UbiA prenyltransferase family. Protoheme IX farnesyltransferase subfamily.

It is found in the cell inner membrane. The enzyme catalyses heme b + (2E,6E)-farnesyl diphosphate + H2O = Fe(II)-heme o + diphosphate. Its pathway is porphyrin-containing compound metabolism; heme O biosynthesis; heme O from protoheme: step 1/1. Functionally, converts heme B (protoheme IX) to heme O by substitution of the vinyl group on carbon 2 of heme B porphyrin ring with a hydroxyethyl farnesyl side group. This chain is Protoheme IX farnesyltransferase, found in Oleidesulfovibrio alaskensis (strain ATCC BAA-1058 / DSM 17464 / G20) (Desulfovibrio alaskensis).